The primary structure comprises 141 residues: Putative pre-16S rRNA nuclease (141 aa).

It belongs to the YqgF nuclease family.

It is found in the cytoplasm. In terms of biological role, could be a nuclease involved in processing of the 5'-end of pre-16S rRNA. In Coxiella burnetii (strain CbuK_Q154) (Coxiella burnetii (strain Q154)), this protein is Putative pre-16S rRNA nuclease.